The following is a 179-amino-acid chain: Large ribosomal subunit protein uL5 (179 aa).

The protein belongs to the universal ribosomal protein uL5 family. In terms of assembly, part of the 50S ribosomal subunit; part of the 5S rRNA/L5/L18/L25 subcomplex. Contacts the 5S rRNA and the P site tRNA. Forms a bridge to the 30S subunit in the 70S ribosome.

Functionally, this is one of the proteins that bind and probably mediate the attachment of the 5S RNA into the large ribosomal subunit, where it forms part of the central protuberance. In the 70S ribosome it contacts protein S13 of the 30S subunit (bridge B1b), connecting the 2 subunits; this bridge is implicated in subunit movement. Contacts the P site tRNA; the 5S rRNA and some of its associated proteins might help stabilize positioning of ribosome-bound tRNAs. The sequence is that of Large ribosomal subunit protein uL5 from Ectopseudomonas mendocina (strain ymp) (Pseudomonas mendocina).